We begin with the raw amino-acid sequence, 236 residues long: Chaperone protein TorD (236 aa).

This sequence belongs to the TorD/DmsD family. TorD subfamily.

The protein localises to the cytoplasm. Its function is as follows. Involved in the biogenesis of TorA. Acts on TorA before the insertion of the molybdenum cofactor and, as a result, probably favors a conformation of the apoenzyme that is competent for acquiring the cofactor. This is Chaperone protein TorD from Colwellia psychrerythraea (strain 34H / ATCC BAA-681) (Vibrio psychroerythus).